Consider the following 78-residue polypeptide: FXYD domain-containing ion transport regulator 7 (78 aa).

Residues 1 to 22 (MATQVPTKVPQDPDPFYYDYDT) are Extracellular-facing. Residues threonine 3 and threonine 7 are each glycosylated (O-linked (GlcNAc) threonine). The chain crosses the membrane as a helical span at residues 23–43 (VQTVGMTLATILFLLGILIIL). The Cytoplasmic segment spans residues 44-78 (SKKVKCRKADSRSESPTCKSCKSELPSSAPGGGGV). The segment at 52-78 (ADSRSESPTCKSCKSELPSSAPGGGGV) is disordered. A Phosphoserine modification is found at serine 71.

Belongs to the FXYD family. As to quaternary structure, regulatory subunit of the sodium/potassium-transporting ATPase which is composed of a catalytic alpha subunit, a non-catalytic beta subunit and an additional regulatory subunit. The regulatory subunit, a member of the FXYD protein family, modulates the enzymatic activity in a tissue- and isoform-specific way by changing affinities of the Na+/K+-ATPase toward Na(+), K(+) or ATP. Post-translationally, O-glycosylated; required for stabilization and translocation to the plasma membrane.

It localises to the cell membrane. Associates with and regulates the activity of the sodium/potassium-transporting ATPase (NKA) which catalyzes the hydrolysis of ATP coupled with the exchange of Na(+) and K(+) ions across the plasma membrane. Reduces the apparent affinity for external K(+), an effect that depends on the presence of external Na(+) and voltage. Increases the apparent affinity for intracellular Na(+). The protein is FXYD domain-containing ion transport regulator 7 (FXYD7) of Bos taurus (Bovine).